The following is a 962-amino-acid chain: Translation initiation factor IF-2 (962 aa).

The disordered stretch occupies residues 101–366; the sequence is AAQTQAAPVR…KKGKKLKLEP (266 aa). A compositionally biased stretch (basic and acidic residues) spans 117 to 141; it reads DAAKARAEAATRAEARAKAEAEAAK. Low complexity predominate over residues 145–157; it reads AKAGNKAKPAAQK. Basic and acidic residues predominate over residues 173–216; it reads KPAEESKAEKAQADKMPSKKPAEPKEKAAKPKHERNGKGKDAKK. Over residues 219–234 the composition is skewed to low complexity; that stretch reads KPAAPAVPQPVVSAEE. Residues 235–269 show a composition bias toward basic and acidic residues; that stretch reads QAQRDEEARRAAALRAHQEALLKEKQERQARREAM. Positions 270-283 are enriched in low complexity; it reads KQQAEQQAKAAQEA. Positions 338–354 are enriched in basic and acidic residues; the sequence is GGRDRNNARNGDDERVR. The tr-type G domain maps to 462 to 631; it reads PRPPVVTVMG…LLEAEVLELT (170 aa). Residues 471 to 478 are G1; sequence GHVDHGKT. 471–478 is a GTP binding site; the sequence is GHVDHGKT. The segment at 496–500 is G2; it reads GITQH. Residues 517-520 are G3; sequence DTPG. Residues 517 to 521 and 571 to 574 each bind GTP; these read DTPGH and NKID. Residues 571–574 are G4; the sequence is NKID. Residues 607–609 form a G5 region; it reads SAK.

The protein belongs to the TRAFAC class translation factor GTPase superfamily. Classic translation factor GTPase family. IF-2 subfamily.

It is found in the cytoplasm. One of the essential components for the initiation of protein synthesis. Protects formylmethionyl-tRNA from spontaneous hydrolysis and promotes its binding to the 30S ribosomal subunits. Also involved in the hydrolysis of GTP during the formation of the 70S ribosomal complex. The sequence is that of Translation initiation factor IF-2 from Neisseria meningitidis serogroup A / serotype 4A (strain DSM 15465 / Z2491).